The sequence spans 62 residues: Kininogen-1 (62 aa).

Positions Met-1–Cys-22 are cleaved as a signal peptide. Positions Glu-24–Tyr-62 are disordered. Residues Glu-30 to Ser-42 are compositionally biased toward acidic residues. The residue at position 54 (Pro-54) is a 4-hydroxyproline; partial. Tyr-62 carries the sulfotyrosine modification.

It belongs to the frog skin active peptide (FSAP) family. Bradykinin-related peptide subfamily. As to expression, expressed by the skin glands.

Its subcellular location is the secreted. Inhibits ACE with a Ki of 1.6 uM, and targets B2 bradykinin receptor (BDKRB2). Provokes contraction of smooth muscle preparation (ileum). In vivo, induces an early hyperalgesic effects in living rats after intraplantar injection. This chain is Kininogen-1, found in Phyllomedusa sauvagei (Sauvage's leaf frog).